A 239-amino-acid chain; its full sequence is 1-(5-phosphoribosyl)-5-[(5-phosphoribosylamino)methylideneamino] imidazole-4-carboxamide isomerase (239 aa).

Aspartate 9 (proton acceptor) is an active-site residue. Aspartate 131 (proton donor) is an active-site residue.

The protein belongs to the HisA/HisF family.

It localises to the cytoplasm. The catalysed reaction is 1-(5-phospho-beta-D-ribosyl)-5-[(5-phospho-beta-D-ribosylamino)methylideneamino]imidazole-4-carboxamide = 5-[(5-phospho-1-deoxy-D-ribulos-1-ylimino)methylamino]-1-(5-phospho-beta-D-ribosyl)imidazole-4-carboxamide. It participates in amino-acid biosynthesis; L-histidine biosynthesis; L-histidine from 5-phospho-alpha-D-ribose 1-diphosphate: step 4/9. The sequence is that of 1-(5-phosphoribosyl)-5-[(5-phosphoribosylamino)methylideneamino] imidazole-4-carboxamide isomerase from Phocaeicola vulgatus (strain ATCC 8482 / DSM 1447 / JCM 5826 / CCUG 4940 / NBRC 14291 / NCTC 11154) (Bacteroides vulgatus).